Consider the following 362-residue polypeptide: Abnormal cell migration protein 13 (362 aa).

An N-terminal signal peptide occupies residues 1–20 (MTKLLIALILFSICWKPYSA). Topologically, residues 21–237 (EPIASFFDGL…ELDPLTTVSG (217 aa)) are extracellular. 2 disulfides stabilise this stretch: Cys36/Cys68 and Cys98/Cys136. Residues 36 to 175 (CKARLDRRLT…KGFKLHWGSF (140 aa)) form the CUB domain. Residue Asn63 is glycosylated (N-linked (GlcNAc...) asparagine). 2 N-linked (GlcNAc...) asparagine glycosylation sites follow: Asn145 and Asn161. Residues 182–225 (NCVTGEFSCGNGECIPIESACDRFADCSNGEDLIHSRQMAANCQ) enclose the LDL-receptor class A domain. Disulfide bonds link Cys183–Cys195, Cys190–Cys208, and Cys202–Cys224. A helical transmembrane segment spans residues 238–258 (VFVLLFSATIILSLCGFIMFV). Residues 259 to 362 (CCLCKCLKST…VRNDVHRNLL (104 aa)) lie on the Cytoplasmic side of the membrane. The tract at residues 275–311 (SSHTTTTTATDYKPDPPQFYPPSPPKMPPPSAASSYT) is disordered. The segment covering 289–305 (DPPQFYPPSPPKMPPPS) has biased composition (pro residues).

As to quaternary structure, interacts with abl-1 (via SH2 and SH3 domains); the interaction is direct. Interacts with sem-5; the interaction is direct. Expressed in pharyngeal-intestinal valve cells and ventral cord neurons.

It is found in the cell membrane. Its subcellular location is the perikaryon. The protein resides in the cell projection. It localises to the axon. The protein localises to the dendrite. Probable receptor that acts as an upstream signaling protein to promote the guidance, migration and positioning of the right Q neuroblast (QR) and its descendants along the anteroposterior body axis, and also the anterior migration of BDU interneurons during larval development. Associates with and recruits the downstream components tyrosine kinase abl-1 and the tyrosine kinase adapter protein sem-5 to the leading edge of migrating Q neuroblasts and their descendants to activate signaling through the two parallel wve-1 and wsp-1 pathways, respectively, and direct migration along the anteroposterior body axis. Involved in cytoskeleton dynamics regulating the organization of the actin cytoskeleton at the leading edge of migrating cells to ensure correct Q cell polarity and promote migration. Role in cytoskeleton organization may be by activation of the wve-1 and wsp-1 pathways which recruit the Arp2/3 complex to the leading edge of migrating cells. Plays a role in regulating the asymmetric distribution of the actin cytoskeleton-binding protein cor-1 in Q neuroblasts which is required for the anterior migration of QR neuroblasts. The sequence is that of Abnormal cell migration protein 13 from Caenorhabditis elegans.